The primary structure comprises 436 residues: DNA primase DnaG (436 aa).

Residues D169–Y243 form the Toprim domain. E175, D217, and D219 together coordinate Mg(2+).

The protein belongs to the archaeal DnaG primase family. In terms of assembly, forms a ternary complex with MCM helicase and DNA. It depends on Mg(2+) as a cofactor.

The enzyme catalyses ssDNA + n NTP = ssDNA/pppN(pN)n-1 hybrid + (n-1) diphosphate.. Functionally, RNA polymerase that catalyzes the synthesis of short RNA molecules used as primers for DNA polymerase during DNA replication. This Methanococcus maripaludis (strain DSM 14266 / JCM 13030 / NBRC 101832 / S2 / LL) protein is DNA primase DnaG.